Consider the following 59-residue polypeptide: Large ribosomal subunit protein uL30 (59 aa).

This sequence belongs to the universal ribosomal protein uL30 family. Part of the 50S ribosomal subunit.

The chain is Large ribosomal subunit protein uL30 from Escherichia coli (strain UTI89 / UPEC).